The sequence spans 334 residues: S-adenosylmethionine:tRNA ribosyltransferase-isomerase (334 aa).

It belongs to the QueA family. As to quaternary structure, monomer.

The protein resides in the cytoplasm. It carries out the reaction 7-aminomethyl-7-carbaguanosine(34) in tRNA + S-adenosyl-L-methionine = epoxyqueuosine(34) in tRNA + adenine + L-methionine + 2 H(+). It functions in the pathway tRNA modification; tRNA-queuosine biosynthesis. Its function is as follows. Transfers and isomerizes the ribose moiety from AdoMet to the 7-aminomethyl group of 7-deazaguanine (preQ1-tRNA) to give epoxyqueuosine (oQ-tRNA). This chain is S-adenosylmethionine:tRNA ribosyltransferase-isomerase, found in Rubrobacter xylanophilus (strain DSM 9941 / JCM 11954 / NBRC 16129 / PRD-1).